Reading from the N-terminus, the 233-residue chain is Thymidylate kinase (233 aa).

ATP is bound at residue 10 to 17; it reads GVDGVGKT.

The protein belongs to the thymidylate kinase family.

The enzyme catalyses dTMP + ATP = dTDP + ADP. Functionally, phosphorylation of dTMP to form dTDP in both de novo and salvage pathways of dTTP synthesis. This is Thymidylate kinase from Bifidobacterium longum subsp. infantis (strain ATCC 15697 / DSM 20088 / JCM 1222 / NCTC 11817 / S12).